A 98-amino-acid chain; its full sequence is NADH-ubiquinone oxidoreductase chain 4L (98 aa).

3 helical membrane passes run 1-21 (MIPT…GMLT), 27-47 (VASL…TALI), and 61-81 (IILL…LISI).

Belongs to the complex I subunit 4L family. Core subunit of respiratory chain NADH dehydrogenase (Complex I) which is composed of 45 different subunits.

The protein localises to the mitochondrion inner membrane. The catalysed reaction is a ubiquinone + NADH + 5 H(+)(in) = a ubiquinol + NAD(+) + 4 H(+)(out). Functionally, core subunit of the mitochondrial membrane respiratory chain NADH dehydrogenase (Complex I) which catalyzes electron transfer from NADH through the respiratory chain, using ubiquinone as an electron acceptor. Part of the enzyme membrane arm which is embedded in the lipid bilayer and involved in proton translocation. The chain is NADH-ubiquinone oxidoreductase chain 4L (MT-ND4L) from Macaca sylvanus (Barbary macaque).